Here is a 278-residue protein sequence, read N- to C-terminus: Undecaprenyl-diphosphatase 2 (278 aa).

The next 7 helical transmembrane spans lie at 1–21 (MSII…FLPI), 38–58 (FPGF…VILY), 85–105 (FMFA…GLLL), 118–138 (FIAG…RFFV), 191–211 (SFLL…GDLL), 223–243 (PLII…IWLI), and 251–271 (LIYF…YFDH).

Belongs to the UppP family.

It localises to the cell membrane. The enzyme catalyses di-trans,octa-cis-undecaprenyl diphosphate + H2O = di-trans,octa-cis-undecaprenyl phosphate + phosphate + H(+). Catalyzes the dephosphorylation of undecaprenyl diphosphate (UPP). Confers resistance to bacitracin. The protein is Undecaprenyl-diphosphatase 2 of Halalkalibacterium halodurans (strain ATCC BAA-125 / DSM 18197 / FERM 7344 / JCM 9153 / C-125) (Bacillus halodurans).